Consider the following 424-residue polypeptide: Elongation factor 1-alpha (424 aa).

A tr-type G domain is found at 5-223 (KPHLNLITIG…DAFKVPEKPI (219 aa)). Residues 14-21 (GHVDHGKS) are G1. GTP is bound at residue 14 to 21 (GHVDHGKS). Residue S21 coordinates Mg(2+). Residues 70–74 (GVTID) form a G2 region. The segment at 91 to 94 (DAPG) is G3. GTP is bound by residues 91–95 (DAPGH) and 148–151 (NKMD). The tract at residues 148–151 (NKMD) is G4. The interval 187 to 189 (SGY) is G5.

It belongs to the TRAFAC class translation factor GTPase superfamily. Classic translation factor GTPase family. EF-Tu/EF-1A subfamily.

It localises to the cytoplasm. It carries out the reaction GTP + H2O = GDP + phosphate + H(+). GTP hydrolase that promotes the GTP-dependent binding of aminoacyl-tRNA to the A-site of ribosomes during protein biosynthesis. The protein is Elongation factor 1-alpha of Thermoplasma volcanium (strain ATCC 51530 / DSM 4299 / JCM 9571 / NBRC 15438 / GSS1).